We begin with the raw amino-acid sequence, 224 residues long: Germin-like protein 8-9 (224 aa).

The first 22 residues, Met1–Ala22, serve as a signal peptide directing secretion. Cys32 and Cys47 are joined by a disulfide. Residues Ala62–Asp212 form the Cupin type-1 domain. Asn76 is a glycosylation site (N-linked (GlcNAc...) asparagine). Residues His109, His111, and Glu116 each contribute to the Mn(2+) site. N-linked (GlcNAc...) asparagine glycosylation is present at Asn135. His157 provides a ligand contact to Mn(2+).

Belongs to the germin family. As to quaternary structure, oligomer (believed to be a pentamer but probably hexamer).

Its subcellular location is the secreted. The protein resides in the extracellular space. It localises to the apoplast. Functionally, plays a role in broad-spectrum disease resistance. Probably has no oxalate oxidase activity even if the active site is conserved. This Oryza sativa subsp. japonica (Rice) protein is Germin-like protein 8-9.